The sequence spans 474 residues: Alginate biosynthesis protein AlgX (474 aa).

The N-terminal stretch at Met1 to Ala26 is a signal peptide. The interval Ala27–Cys347 is SGNH hydrolase-like domain. Residues Cys44 and Cys229 are joined by a disulfide bond. Asp174 is a catalytic residue. His176 serves as the catalytic Proton acceptor. Ser269 (nucleophile) is an active-site residue. An intrachain disulfide couples Cys347 to Cys460. The CBM domain stretch occupies residues Ser348–Arg474.

This sequence belongs to the AlgX family. In terms of assembly, monomer. Interacts with AlgK and MucD.

Its subcellular location is the periplasm. Its pathway is glycan biosynthesis; alginate biosynthesis. Plays two roles in the biosynthesis of the exopolysaccharide alginate: protects alginate from degradation as the polymer traverses the periplasm, and also plays a role in its O-acetylation. Acetylation of alginate causes the cells in the biofilm to adhere better to lung epithelium, form microcolonies, and resist the effects of the host immune system and/or antibiotics. Displays a low acetylesterase activity in vitro using a pseudosubstrate, 3-carboxyumbelliferyl acetate. Probably has acetyltransferase activity in vivo. In Pseudomonas aeruginosa (strain ATCC 15692 / DSM 22644 / CIP 104116 / JCM 14847 / LMG 12228 / 1C / PRS 101 / PAO1), this protein is Alginate biosynthesis protein AlgX (algX).